Here is a 657-residue protein sequence, read N- to C-terminus: N-acetylgalactosaminyltransferase 7 (657 aa).

At 1–6 (MRLKIG) the chain is on the cytoplasmic side. The chain crosses the membrane as a helical; Signal-anchor for type II membrane protein span at residues 7 to 29 (FILRSLLVVGSFLGLVVLWSSLS). Disordered regions lie at residues 30–66 (SRPDDQSPLSRMREDRDVNNPLPNRGGNGLAPGDDRF) and 83–105 (ESIRRKNKAKNEQERHAGGDSQR). At 30–657 (SRPDDQSPLS…KWEMNNIHSV (628 aa)) the chain is on the lumenal side. Intrachain disulfides connect Cys197/Cys435, Cys426/Cys507, Cys545/Cys562, Cys585/Cys600, and Cys625/Cys640. The catalytic subdomain A stretch occupies residues 206-317 (LLTSSVVIVF…VNWYAPLVAP (112 aa)). Positions 247 and 277 each coordinate substrate. Residues Asp301 and His303 each coordinate Mn(2+). The catalytic subdomain B stretch occupies residues 381–443 (PYRSPAMAGG…PCSRVGHIYR (63 aa)). Trp412 contacts substrate. Position 440 (His440) interacts with Mn(2+). Arg443 provides a ligand contact to substrate. Residues 532 to 652 (VEWGEIRGLE…SKMTQKWEMN (121 aa)) form the Ricin B-type lectin domain.

It belongs to the glycosyltransferase 2 family. GalNAc-T subfamily. Requires Mn(2+) as cofactor. Highly expressed in sublingual gland. Expressed at lower level in stomach, small intestiine and colon.

The protein localises to the golgi apparatus membrane. It catalyses the reaction L-seryl-[protein] + UDP-N-acetyl-alpha-D-galactosamine = a 3-O-[N-acetyl-alpha-D-galactosaminyl]-L-seryl-[protein] + UDP + H(+). The catalysed reaction is L-threonyl-[protein] + UDP-N-acetyl-alpha-D-galactosamine = a 3-O-[N-acetyl-alpha-D-galactosaminyl]-L-threonyl-[protein] + UDP + H(+). It functions in the pathway protein modification; protein glycosylation. Its function is as follows. Glycopeptide transferase involved in O-linked oligosaccharide biosynthesis, which catalyzes the transfer of an N-acetyl-D-galactosamine residue to an already glycosylated peptide. In contrast to other proteins of the family, it does not act as a peptide transferase that transfers GalNAc onto serine or threonine residue on the protein receptor, but instead requires the prior addition of a GalNAc on a peptide before adding additional GalNAc moieties. Some peptide transferase activity is however not excluded, considering that its appropriate peptide substrate may remain unidentified. The chain is N-acetylgalactosaminyltransferase 7 (Galnt7) from Mus musculus (Mouse).